We begin with the raw amino-acid sequence, 451 residues long: Eukaryotic translation initiation factor 3 subunit E (451 aa).

The 181-residue stretch at 245 to 425 (PFFNHEPARD…GTVVMNHPPS (181 aa)) folds into the PCI domain.

The protein belongs to the eIF-3 subunit E family. As to quaternary structure, component of the eukaryotic translation initiation factor 3 (eIF-3) complex.

The protein resides in the cytoplasm. Component of the eukaryotic translation initiation factor 3 (eIF-3) complex, which is involved in protein synthesis of a specialized repertoire of mRNAs and, together with other initiation factors, stimulates binding of mRNA and methionyl-tRNAi to the 40S ribosome. The eIF-3 complex specifically targets and initiates translation of a subset of mRNAs involved in cell proliferation. The polypeptide is Eukaryotic translation initiation factor 3 subunit E (int6) (Sclerotinia sclerotiorum (strain ATCC 18683 / 1980 / Ss-1) (White mold)).